The chain runs to 86 residues: uncharacterized protein (86 aa).

This is an uncharacterized protein from Haemophilus influenzae (strain ATCC 51907 / DSM 11121 / KW20 / Rd).